A 324-amino-acid polypeptide reads, in one-letter code: Corticotropin-releasing factor-binding protein (324 aa).

An N-terminal signal peptide occupies residues 1–23; sequence MAPTLKLQCHFILVCLLALRGES. 5 disulfide bridges follow: cysteine 62–cysteine 83, cysteine 106–cysteine 143, cysteine 185–cysteine 207, cysteine 239–cysteine 266, and cysteine 279–cysteine 320. Residue asparagine 206 is glycosylated (N-linked (GlcNAc...) asparagine).

The protein belongs to the CRF-binding protein family.

The protein resides in the secreted. In terms of biological role, binds CRF and inactivates it. May prevent inappropriate pituitary-adrenal stimulation in pregnancy. This is Corticotropin-releasing factor-binding protein (CRHBP) from Ovis aries (Sheep).